The primary structure comprises 34 residues: Conotoxin de13a (34 aa).

Proline 3 and proline 7 each carry 4-hydroxyproline. Residue tryptophan 14 is modified to 6'-bromotryptophan. At lysine 18 the chain carries 5-hydroxylysine. Proline 21 is subject to 4-hydroxyproline. Lysine 25 is subject to 5-hydroxylysine. Histidine 32 carries the histidine amide modification.

Post-translationally, contains 4 disulfide bonds. The diastereomeric form of 5-hydroxylysine found was not conclusively established, but it is probably 5R. In terms of tissue distribution, expressed by the venom duct.

The protein localises to the secreted. This is Conotoxin de13a from Conasprella delessertii (Sozon's cone).